The sequence spans 153 residues: 3-hydroxyacyl-[acyl-carrier-protein] dehydratase FabZ (153 aa).

His57 is a catalytic residue.

Belongs to the thioester dehydratase family. FabZ subfamily.

It is found in the cytoplasm. It carries out the reaction a (3R)-hydroxyacyl-[ACP] = a (2E)-enoyl-[ACP] + H2O. In terms of biological role, involved in unsaturated fatty acids biosynthesis. Catalyzes the dehydration of short chain beta-hydroxyacyl-ACPs and long chain saturated and unsaturated beta-hydroxyacyl-ACPs. The polypeptide is 3-hydroxyacyl-[acyl-carrier-protein] dehydratase FabZ (Aeromonas salmonicida (strain A449)).